Here is a 126-residue protein sequence, read N- to C-terminus: Aspartate 1-decarboxylase (126 aa).

Ser25 acts as the Schiff-base intermediate with substrate; via pyruvic acid in catalysis. Ser25 bears the Pyruvic acid (Ser) mark. Residue Thr57 coordinates substrate. Tyr58 serves as the catalytic Proton donor. A substrate-binding site is contributed by Gly73–Ala75.

Belongs to the PanD family. Heterooctamer of four alpha and four beta subunits. Pyruvate serves as cofactor. In terms of processing, is synthesized initially as an inactive proenzyme, which is activated by self-cleavage at a specific serine bond to produce a beta-subunit with a hydroxyl group at its C-terminus and an alpha-subunit with a pyruvoyl group at its N-terminus.

It is found in the cytoplasm. It catalyses the reaction L-aspartate + H(+) = beta-alanine + CO2. It participates in cofactor biosynthesis; (R)-pantothenate biosynthesis; beta-alanine from L-aspartate: step 1/1. Functionally, catalyzes the pyruvoyl-dependent decarboxylation of aspartate to produce beta-alanine. The protein is Aspartate 1-decarboxylase of Chromobacterium violaceum (strain ATCC 12472 / DSM 30191 / JCM 1249 / CCUG 213 / NBRC 12614 / NCIMB 9131 / NCTC 9757 / MK).